Reading from the N-terminus, the 254-residue chain is MRVLLSNDDGVHAAGLRALAEAFHGDEVWVVAPDREQSASSHAISLHRPLRLLEVAPRWYAVDGTPTDAVYMGLNLVLRDARPDVVVSGVNHGPNLGNDVLYSGTVAAAMEGALLGVNAVAVSLAAPPPHDFGEAARFAAALARQVVARPPPAPVLLNVNVPPGPVRGYRFTRLGRRTYGNEVVEKTDPRGRKYYWIGGEGRVHNEDIPGSDCNAVLLERLAAVTPLHLDGTHDPMFQELRSWTVPGYEKEPAP.

A divalent metal cation is bound by residues Asp-8, Asp-9, Ser-38, and Asn-91.

It belongs to the SurE nucleotidase family. A divalent metal cation is required as a cofactor.

It is found in the cytoplasm. The catalysed reaction is a ribonucleoside 5'-phosphate + H2O = a ribonucleoside + phosphate. Its function is as follows. Nucleotidase that shows phosphatase activity on nucleoside 5'-monophosphates. This Anaeromyxobacter dehalogenans (strain 2CP-C) protein is 5'-nucleotidase SurE.